The primary structure comprises 275 residues: Arylamine N-acetyltransferase (275 aa).

Catalysis depends on cysteine 70, which acts as the Acyl-thioester intermediate. Active-site residues include histidine 110 and aspartate 127.

Belongs to the arylamine N-acetyltransferase family. In terms of assembly, homodimer and homotetramer.

It catalyses the reaction an arylamine + acetyl-CoA = an N-acetylarylamine + CoA. Catalyzes the transfer of the acetyl group from acetyl coenzyme A to the free amino group of arylamines and hydrazines. Substrates include isoniazid, anisidine, and 4-aminoveratrole, and to a much lesser extent, p-aminobenzoic acid. The sequence is that of Arylamine N-acetyltransferase from Mycolicibacterium smegmatis (Mycobacterium smegmatis).